Consider the following 382-residue polypeptide: Mannitol-1-phosphate 5-dehydrogenase (382 aa).

3–14 provides a ligand contact to NAD(+); it reads ALHFGAGNIGRG. Lysine 269 is modified (N6-acetyllysine).

It belongs to the mannitol dehydrogenase family.

It catalyses the reaction D-mannitol 1-phosphate + NAD(+) = beta-D-fructose 6-phosphate + NADH + H(+). This chain is Mannitol-1-phosphate 5-dehydrogenase, found in Escherichia coli O45:K1 (strain S88 / ExPEC).